The primary structure comprises 112 residues: 2Fe-2S ferredoxin (112 aa).

In terms of domain architecture, 2Fe-2S ferredoxin-type spans 5–107 (IKVTFIINDG…GIKVRLPSAT (103 aa)). 4 residues coordinate [2Fe-2S] cluster: C42, C48, C51, and C88.

The protein belongs to the adrenodoxin/putidaredoxin family. It depends on [2Fe-2S] cluster as a cofactor.

Ferredoxin are iron-sulfur proteins that transfer electrons in a wide variety of metabolic reactions. The polypeptide is 2Fe-2S ferredoxin (fdxB) (Rickettsia montanensis).